The sequence spans 370 residues: 4-hydroxy-3-methylbut-2-en-1-yl diphosphate synthase (flavodoxin) (370 aa).

Positions 270, 273, 305, and 312 each coordinate [4Fe-4S] cluster.

This sequence belongs to the IspG family. It depends on [4Fe-4S] cluster as a cofactor.

The enzyme catalyses (2E)-4-hydroxy-3-methylbut-2-enyl diphosphate + oxidized [flavodoxin] + H2O + 2 H(+) = 2-C-methyl-D-erythritol 2,4-cyclic diphosphate + reduced [flavodoxin]. It functions in the pathway isoprenoid biosynthesis; isopentenyl diphosphate biosynthesis via DXP pathway; isopentenyl diphosphate from 1-deoxy-D-xylulose 5-phosphate: step 5/6. Functionally, converts 2C-methyl-D-erythritol 2,4-cyclodiphosphate (ME-2,4cPP) into 1-hydroxy-2-methyl-2-(E)-butenyl 4-diphosphate. The protein is 4-hydroxy-3-methylbut-2-en-1-yl diphosphate synthase (flavodoxin) of Saccharophagus degradans (strain 2-40 / ATCC 43961 / DSM 17024).